A 132-amino-acid polypeptide reads, in one-letter code: Pro-MCH 1 (132 aa).

Positions 1 to 24 (MRHSVLSISFAVALFLECYTPSTA) are cleaved as a signal peptide. A disulfide bridge links Cys120 with Cys129.

Belongs to the melanin-concentrating hormone family. Pituitary gland. Produced in neurons of lateral basal hypothalamus which project both to the brain and to the neural lobe of the pituitary gland from where MCH is released.

Functionally, plays a role in skin pigmentation by antagonizing the action of melanotropin alpha. Induces melanin concentration within the melanophores. May participate in the control of the hypothalamo-pituitary adrenal gland axis by inhibiting the release of ACTH. The polypeptide is Pro-MCH 1 (mch1) (Oncorhynchus mykiss (Rainbow trout)).